Reading from the N-terminus, the 501-residue chain is MEVDGEARPFLLFSKPKSSKKKPKQEAEPQVHTQPEEPPNPSPSPAIEPDLRDSDEAPAAAVTEHAGDDAAAAAVPSTFAELGLSQWLVDVCDSLGMRVPTAVQRRCIPRALEGRDVLGIAETGSGKTAAFALPILHRLGEDPYGVAALALAPTRELAAQLAEQFRALGAPLGLRCLAAIGGFDSLGQAKGLARRPHVVVATPGRIATLINDDPDLAKVFARTKFLVLDEADRVLDINFEEDLRVIFGSLPKKRQTFLFSATISDNLRSLLELSGNNSYFFEAYEGFKTVDTLKQLYIHVPPDAKELYLFYLLSKMNEDNIRSVIVFVSTCRTCQYLDFLLEELGHPAVSLHSHKPQSRRLAALHNFKSSKVPVLLATDVASRGLDIQTVDLVINYDVPRYPRDYIHRVGRTARATRGGLSISFITTQRDIRLLHEIEDVVGKQLGAYDGEMRDVNKDATKVFKARRLANMKMADEGHEDKVQARKEQKKRAQERKRKHDE.

The disordered stretch occupies residues 1–68 (MEVDGEARPF…AAAVTEHAGD (68 aa)). Pro residues predominate over residues 36–46 (EEPPNPSPSPA). The segment covering 59 to 68 (AAAVTEHAGD) has biased composition (low complexity). The short motif at 77 to 105 (STFAELGLSQWLVDVCDSLGMRVPTAVQR) is the Q motif element. The Helicase ATP-binding domain maps to 108–281 (IPRALEGRDV…ELSGNNSYFF (174 aa)). 121–128 (AETGSGKT) lines the ATP pocket. A DEAD box motif is present at residues 229–232 (DEAD). A Helicase C-terminal domain is found at 292–456 (TLKQLYIHVP…AYDGEMRDVN (165 aa)). Over residues 473-486 (MADEGHEDKVQARK) the composition is skewed to basic and acidic residues. The segment at 473 to 501 (MADEGHEDKVQARKEQKKRAQERKRKHDE) is disordered. The stretch at 475 to 501 (DEGHEDKVQARKEQKKRAQERKRKHDE) forms a coiled coil. Positions 487 to 501 (EQKKRAQERKRKHDE) are enriched in basic residues.

The protein belongs to the DEAD box helicase family. DDX49/DBP8 subfamily.

The catalysed reaction is ATP + H2O = ADP + phosphate + H(+). In Oryza sativa subsp. japonica (Rice), this protein is DEAD-box ATP-dependent RNA helicase 36.